A 382-amino-acid polypeptide reads, in one-letter code: Flap endonuclease 1-B (382 aa).

Residues 1-104 (MGIHGLAKLI…GELAKRSERR (104 aa)) form an N-domain region. Position 34 (D34) interacts with Mg(2+). DNA contacts are provided by R47 and R70. Positions 86, 158, 160, 179, and 181 each coordinate Mg(2+). The segment at 122–253 (NIEKFNKRLV…KRAIDLIRQH (132 aa)) is I-domain. Residue E158 participates in DNA binding. DNA contacts are provided by G231 and D233. D233 is a binding site for Mg(2+). Positions 336 to 344 (TQGRLDDFF) are interaction with PCNA. Residues 352 to 382 (STKRKEVESKGSTKKKSKTGGTPAGKFKRGK) form a disordered region.

This sequence belongs to the XPG/RAD2 endonuclease family. FEN1 subfamily. Interacts with PCNA. Three molecules of fen1 bind to one PCNA trimer with each molecule binding to one PCNA monomer. PCNA stimulates the nuclease activity without altering cleavage specificity. Requires Mg(2+) as cofactor. In terms of processing, phosphorylated. Phosphorylation upon DNA damage induces relocalization to the nuclear plasma.

The protein resides in the nucleus. The protein localises to the nucleolus. It localises to the nucleoplasm. Its subcellular location is the mitochondrion. Functionally, structure-specific nuclease with 5'-flap endonuclease and 5'-3' exonuclease activities involved in DNA replication and repair. During DNA replication, cleaves the 5'-overhanging flap structure that is generated by displacement synthesis when DNA polymerase encounters the 5'-end of a downstream Okazaki fragment. It enters the flap from the 5'-end and then tracks to cleave the flap base, leaving a nick for ligation. Also involved in the long patch base excision repair (LP-BER) pathway, by cleaving within the apurinic/apyrimidinic (AP) site-terminated flap. Acts as a genome stabilization factor that prevents flaps from equilibrating into structures that lead to duplications and deletions. Also possesses 5'-3' exonuclease activity on nicked or gapped double-stranded DNA, and exhibits RNase H activity. Also involved in replication and repair of rDNA and in repairing mitochondrial DNA. This Xenopus laevis (African clawed frog) protein is Flap endonuclease 1-B (fen1-b).